The following is a 374-amino-acid chain: Chaperone protein DnaJ (374 aa).

A J domain is found at 6-70 (DYYDILGVSK…QKRAQYDQFG (65 aa)). Residues 135–217 (GKKTTIKYSR…CGGTGHTSQQ (83 aa)) form a CR-type zinc finger. Positions 148, 151, 165, 168, 191, 194, 205, and 208 each coordinate Zn(2+). CXXCXGXG motif repeat units lie at residues 148–155 (CKTCGGSG), 165–172 (CHKCNGTG), 191–198 (CDVCNGTG), and 205–212 (CPTCGGTG). Disordered regions lie at residues 308-328 (GTNF…GTGD) and 347-374 (EALK…KFMN).

It belongs to the DnaJ family. As to quaternary structure, homodimer. The cofactor is Zn(2+).

It is found in the cytoplasm. Participates actively in the response to hyperosmotic and heat shock by preventing the aggregation of stress-denatured proteins and by disaggregating proteins, also in an autonomous, DnaK-independent fashion. Unfolded proteins bind initially to DnaJ; upon interaction with the DnaJ-bound protein, DnaK hydrolyzes its bound ATP, resulting in the formation of a stable complex. GrpE releases ADP from DnaK; ATP binding to DnaK triggers the release of the substrate protein, thus completing the reaction cycle. Several rounds of ATP-dependent interactions between DnaJ, DnaK and GrpE are required for fully efficient folding. Also involved, together with DnaK and GrpE, in the DNA replication of plasmids through activation of initiation proteins. The chain is Chaperone protein DnaJ from Pediococcus pentosaceus (strain ATCC 25745 / CCUG 21536 / LMG 10740 / 183-1w).